The following is a 323-amino-acid chain: NADH-cytochrome b5 reductase 2 (323 aa).

Residues 30–46 (LAPIYTAVGLTGLSVGL) form a helical membrane-spanning segment. Residues 72-177 (QGWVDLKLSE…KGPLPKYQWE (106 aa)) enclose the FAD-binding FR-type domain. 180–215 (KHEHIALIAGGTGITPMYQLIRQIFKNPDDKTKVTL) is an FAD binding site.

The protein belongs to the flavoprotein pyridine nucleotide cytochrome reductase family. FAD serves as cofactor.

Its subcellular location is the mitochondrion outer membrane. The enzyme catalyses 2 Fe(III)-[cytochrome b5] + NADH = 2 Fe(II)-[cytochrome b5] + NAD(+) + H(+). Functionally, may mediate the reduction of outer membrane cytochrome b5. The chain is NADH-cytochrome b5 reductase 2 (mcr1) from Aspergillus oryzae (strain ATCC 42149 / RIB 40) (Yellow koji mold).